The sequence spans 577 residues: Hemagglutinin-neuraminidase (577 aa).

Topologically, residues 1 to 26 are intravirion; it reads MDRAVSQVALENDEREAKNTWRLIFR. The helical transmembrane segment at 27–47 threads the bilayer; sequence IAILLLTVVTLATSVASLVYS. Topologically, residues 48 to 577 are virion surface; sequence MGASTPSDLV…NDGVREARSG (530 aa). Asparagine 119 carries an N-linked (GlcNAc...) asparagine; by host glycan. An important for interaction with fusion/F protein region spans residues 124 to 152; that stretch reads GAPIHDPDFIGGIGKELIVDDASDVTSFY. Intrachain disulfides connect cysteine 172–cysteine 196, cysteine 186–cysteine 247, and cysteine 238–cysteine 251. An involved in neuraminidase activity region spans residues 234 to 239; sequence NRKSCS. N-linked (GlcNAc...) asparagine; by host glycans are attached at residues asparagine 341 and asparagine 433. Intrachain disulfides connect cysteine 344/cysteine 461 and cysteine 455/cysteine 465. N-linked (GlcNAc...) asparagine; by host glycans are attached at residues asparagine 481 and asparagine 538. The cysteines at positions 531 and 542 are disulfide-linked.

This sequence belongs to the paramyxoviruses hemagglutinin-neuraminidase family. In terms of assembly, homotetramer; composed of disulfide-linked homodimers. Interacts with F protein trimer. Interacts with host CG-1B; this interaction inhibits viral adsorption and replication rather than internalization.

The protein resides in the virion membrane. Its subcellular location is the host cell membrane. The enzyme catalyses Hydrolysis of alpha-(2-&gt;3)-, alpha-(2-&gt;6)-, alpha-(2-&gt;8)- glycosidic linkages of terminal sialic acid residues in oligosaccharides, glycoproteins, glycolipids, colominic acid and synthetic substrates.. In terms of biological role, mediates the viral entry into the host cell together with fusion/F protein. Attaches the virus to sialic acid-containing cell receptors and thereby initiates infection. Binding of HN protein to the receptor induces a conformational change that allows the F protein to trigger virion/cell membranes fusion. Its function is as follows. Neuraminidase activity ensures the efficient spread of the virus by dissociating the mature virions from the neuraminic acid containing glycoproteins. The sequence is that of Hemagglutinin-neuraminidase (HN) from Gallus gallus (Chicken).